A 236-amino-acid chain; its full sequence is 2-C-methyl-D-erythritol 4-phosphate cytidylyltransferase (236 aa).

This sequence belongs to the IspD/TarI cytidylyltransferase family. IspD subfamily. Homodimer.

The catalysed reaction is 2-C-methyl-D-erythritol 4-phosphate + CTP + H(+) = 4-CDP-2-C-methyl-D-erythritol + diphosphate. It functions in the pathway isoprenoid biosynthesis; isopentenyl diphosphate biosynthesis via DXP pathway; isopentenyl diphosphate from 1-deoxy-D-xylulose 5-phosphate: step 2/6. In terms of biological role, catalyzes the formation of 4-diphosphocytidyl-2-C-methyl-D-erythritol from CTP and 2-C-methyl-D-erythritol 4-phosphate (MEP). The protein is 2-C-methyl-D-erythritol 4-phosphate cytidylyltransferase of Enterobacter sp. (strain 638).